Reading from the N-terminus, the 158-residue chain is Probable inactive acireductone dioxygenase 2 (158 aa).

This sequence belongs to the acireductone dioxygenase (ARD) family.

It is found in the cytoplasm. It localises to the nucleus. Functionally, probable inactive acireductone dioxygenase. The sequence is that of Probable inactive acireductone dioxygenase 2 from Caenorhabditis elegans.